The primary structure comprises 472 residues: WD repeat-containing protein 88 (472 aa).

The interval 1–22 (MASPPRCSPTAHDRECKLPPPS) is disordered. WD repeat units lie at residues 100–139 (GHEH…VVRD), 143–182 (RPKA…LLWK), 184–224 (RYDT…TVSV), 228–267 (HHTR…TLLT), 271–310 (AHSN…FRNC), 319–358 (GHEG…RKLS), and 361–400 (GHND…EIPL). Positions 447-472 (LPADTSSSSSSSERENSPPPRGSKDD) are disordered. A compositionally biased stretch (basic and acidic residues) spans 458–472 (SERENSPPPRGSKDD).

The chain is WD repeat-containing protein 88 (WDR88) from Homo sapiens (Human).